The following is a 109-amino-acid chain: uncharacterized protein (109 aa).

Residues 36–109 are disordered; it reads NSSNNLNNNN…KKKKKKRRVK (74 aa). Residues 39 to 88 are compositionally biased toward low complexity; sequence NNLNNNNFNENNLKNNNNRNGNNNNNNNNNNNNNNNNNNNNNNNNNNNNN. Positions 99 to 109 are enriched in basic residues; sequence QKKKKKKRRVK.

This is an uncharacterized protein from Dictyostelium discoideum (Social amoeba).